We begin with the raw amino-acid sequence, 873 residues long: MKAAPTLSKQLIFQYEHQTADFNMDELVQSAARVIAPLWPIETFAARHPWMGLEEQTFEQTARQLKQQLHVDIYPKSSIFRSAKQRGEIDETILEKKLINWLDSHQPGMQRETAEAFCKAALKLDEIPGQLLRSRQVKKLAKQAARGTIDGRKTSFIKPLSVFAGQKSAHLLDHHVIKWCKLFLDESQSAWRLPHREKGFYSAWRQLVEHDPALSRAERQRLNGWPEEPRDAMKKALRAFDISNADVQAYLEAHLLSLPGWAGMMLWRSQQSQDEEELLLEYLAVRLSMEWMLVEPYLPLPKPNPEKEMQLVPLIASWLHWGGLTPEEWLELSAAEQKARLTLARRFDDITRRRLWLEAWEQTYAAEVRKLITANKPAAADKSETVLAQFAFCIDVRSEPFRRALEKSGPFETYGTAGFFNMAIETCELGTKHSHSSLPVILKPQHRVEETAEELPFKSYQEHKKAAASLSSAFKTMKQNLLAGMLLPEVSGPWLSLQMAARSLVPRAAGQAFRNARKTWLKKPQTKLSLDRTETSEAGIPVGFTEEEKAAYARQALKMMGITDRFAPLVVICGHGSRSTNNPYASALDCGACGGASGAFNARVLAALCNLPSVRERLRSDGIFIPDDTVFAAAEHITTLDELHWLYVPELPAKAQQAFDRINSVLPDVSRTVGAERLEELPQLGYQNPRNEVERFAEDWSEIRPEWGLARNASFIIGTRRLTRGADLEGRAFLHSYDWRNDEDGSILSGIISGPGTVAQWINLQYYASTVAPHYYGSGNKATQTVTAGLGVMQGNASDLLAGLPWQSVMRSDDEIYHAPLRLLIVIEAPDDDIERLLDRDHSFRQKAENGWIHLASINPEGKWKNWTNTINE.

Positions 393, 395, 575, and 590 each coordinate Zn(2+).

The protein belongs to the inorganic carbon transporter (TC 9.A.2) DabA family. In terms of assembly, forms a complex with DabB. Zn(2+) is required as a cofactor.

It localises to the cell membrane. Its function is as follows. Part of an energy-coupled inorganic carbon pump. The sequence is that of Probable inorganic carbon transporter subunit DabA from Bacillus licheniformis (strain ATCC 14580 / DSM 13 / JCM 2505 / CCUG 7422 / NBRC 12200 / NCIMB 9375 / NCTC 10341 / NRRL NRS-1264 / Gibson 46).